The primary structure comprises 461 residues: Ribulose bisphosphate carboxylase (461 aa).

A substrate-binding site is contributed by asparagine 113. The active-site Proton acceptor is the lysine 168. Lysine 170 is a substrate binding site. Positions 193, 195, and 196 each coordinate Mg(2+). N6-carboxylysine is present on lysine 193. Histidine 289 serves as the catalytic Proton acceptor. Positions 290, 323, and 370 each coordinate substrate.

The protein belongs to the RuBisCO large chain family. Type II subfamily. As to quaternary structure, homodimer. Requires Mg(2+) as cofactor.

The catalysed reaction is 2 (2R)-3-phosphoglycerate + 2 H(+) = D-ribulose 1,5-bisphosphate + CO2 + H2O. It carries out the reaction D-ribulose 1,5-bisphosphate + O2 = 2-phosphoglycolate + (2R)-3-phosphoglycerate + 2 H(+). Functionally, ruBisCO catalyzes two reactions: the carboxylation of D-ribulose 1,5-bisphosphate, the primary event in carbon dioxide fixation, as well as the oxidative fragmentation of the pentose substrate. Both reactions occur simultaneously and in competition at the same active site. The polypeptide is Ribulose bisphosphate carboxylase (Thiomonas intermedia (strain K12) (Thiobacillus intermedius)).